Reading from the N-terminus, the 111-residue chain is Colipase (111 aa).

The signal sequence occupies residues 1 to 16 (MKVLVLLLVTLAVVYA). The propeptide at 17-21 (APDPR) is enterostatin, activation peptide. 5 cysteine pairs are disulfide-bonded: Cys-33–Cys-44, Cys-39–Cys-55, Cys-43–Cys-77, Cys-65–Cys-85, and Cys-79–Cys-103.

Belongs to the colipase family. As to quaternary structure, forms a 1:1 stoichiometric complex with pancreatic lipase. Expressed by the pancreas.

It is found in the secreted. In terms of biological role, colipase is a cofactor of pancreatic lipase. It allows the lipase to anchor itself to the lipid-water interface. Without colipase the enzyme is washed off by bile salts, which have an inhibitory effect on the lipase. Functionally, enterostatin has a biological activity as a satiety signal. The polypeptide is Colipase (CLPS) (Ictidomys tridecemlineatus (Thirteen-lined ground squirrel)).